A 593-amino-acid polypeptide reads, in one-letter code: Scarecrow-like protein 1 (593 aa).

Disordered stretches follow at residues 29–61 and 188–216; these read NPKL…PCLT and YQNE…SKEV. Positions 35–48 are enriched in polar residues; that stretch reads LNENGNNNGVSSAQ. The span at 202–211 shows a compositional bias: low complexity; the sequence is SSSADSNSHV. The GRAS domain occupies 213-593; sequence SKEVVSQATP…KSLIVASAWR (381 aa). Residues 220–280 form a leucine repeat I (LRI) region; the sequence is ATPKQILISC…AARMAASGKF (61 aa). The interval 299-364 is VHIID; sequence MQVLFEVCPC…GKRPRLRLTG (66 aa). The short motif at 330-334 is the VHIID element; that stretch reads VHIID. The tract at residues 380-411 is leucine repeat II (LRII); sequence IIGLRLEQLAEDNGVSFKFKAMPSKTSIVSPS. Residues 421 to 515 are PFYRE; that stretch reads LIVNFAFQLH…RQCLARDIVN (95 aa). Positions 518–593 are SAW; that stretch reads ACEGEERIER…KSLIVASAWR (76 aa).

It belongs to the GRAS family. In terms of tissue distribution, expressed in seedlings, roots, shoots, leaves, flowers and siliques.

Its subcellular location is the nucleus. Functionally, probable transcription factor involved in plant development. In Arabidopsis thaliana (Mouse-ear cress), this protein is Scarecrow-like protein 1 (SCL1).